The following is a 92-amino-acid chain: Acylphosphatase (92 aa).

Residues 5 to 90 (TWRLVAHGRV…GEFAGFEFRP (86 aa)) enclose the Acylphosphatase-like domain. Active-site residues include R20 and N38.

The protein belongs to the acylphosphatase family.

The catalysed reaction is an acyl phosphate + H2O = a carboxylate + phosphate + H(+). The sequence is that of Acylphosphatase (acyP) from Cupriavidus necator (strain ATCC 17699 / DSM 428 / KCTC 22496 / NCIMB 10442 / H16 / Stanier 337) (Ralstonia eutropha).